The sequence spans 369 residues: S-(hydroxymethyl)glutathione dehydrogenase (369 aa).

Zn(2+) is bound by residues Cys-40, His-62, Cys-92, Cys-95, Cys-98, Cys-106, and Cys-169.

The protein belongs to the zinc-containing alcohol dehydrogenase family. Class-III subfamily. Homodimer. Requires Zn(2+) as cofactor.

It is found in the cytoplasm. It catalyses the reaction S-(hydroxymethyl)glutathione + NADP(+) = S-formylglutathione + NADPH + H(+). It carries out the reaction S-(hydroxymethyl)glutathione + NAD(+) = S-formylglutathione + NADH + H(+). The catalysed reaction is a primary alcohol + NAD(+) = an aldehyde + NADH + H(+). The enzyme catalyses a secondary alcohol + NAD(+) = a ketone + NADH + H(+). It catalyses the reaction S-nitrosoglutathione + NADH + H(+) = S-(hydroxysulfenamide)glutathione + NAD(+). In terms of biological role, has high formaldehyde dehydrogenase activity in the presence of glutathione and catalyzes the oxidation of normal alcohols in a reaction that is not GSH-dependent. In addition, hemithiolacetals other than those formed from GSH, including omega-thiol fatty acids, also are substrates. Also acts as a S-nitroso-glutathione reductase by catalyzing the NADH-dependent reduction of S-nitrosoglutathione. This Escherichia coli (strain ATCC 8739 / DSM 1576 / NBRC 3972 / NCIMB 8545 / WDCM 00012 / Crooks) protein is S-(hydroxymethyl)glutathione dehydrogenase (frmA).